The primary structure comprises 519 residues: Chaperone SurA (519 aa).

Positions 1–31 are cleaved as a signal peptide; that stretch reads MMRSLHSLRRMSGTVLALMLAAGLPLSAAQA. 2 stretches are compositionally biased toward low complexity: residues 31 to 45 and 197 to 207; these read AQPA…QKPA and PAAAQATRAPA. Disordered regions lie at residues 31-50 and 196-221; these read AQPA…PAPS and NPAA…PAQS. A PpiC 1 domain is found at 223-324; the sequence is PAMLVLAQIL…NGFHILKVVD (102 aa). The interval 328–361 is disordered; that stretch reads GGQPAQAARPAPAPAPQQPSSFQEGPSVAAPQGP. Positions 364 to 463 constitute a PpiC 2 domain; the sequence is VTQTHARHIL…FGWHLIQVLE (100 aa).

The protein resides in the periplasm. It catalyses the reaction [protein]-peptidylproline (omega=180) = [protein]-peptidylproline (omega=0). Its function is as follows. Chaperone involved in the correct folding and assembly of outer membrane proteins. Recognizes specific patterns of aromatic residues and the orientation of their side chains, which are found more frequently in integral outer membrane proteins. May act in both early periplasmic and late outer membrane-associated steps of protein maturation. This Bordetella pertussis (strain Tohama I / ATCC BAA-589 / NCTC 13251) protein is Chaperone SurA.